Reading from the N-terminus, the 171-residue chain is Allophycocyanin subunit beta-18 (171 aa).

Residue Asn-72 is modified to N4-methylasparagine. Cys-82 serves as a coordination point for (2R,3E)-phycocyanobilin.

This sequence belongs to the phycobiliprotein family. In terms of assembly, heterodimer of an alpha and a beta chain. In terms of processing, contains one covalently linked bilin chromophore.

The protein resides in the plastid. The protein localises to the chloroplast thylakoid membrane. Its function is as follows. Light-harvesting photosynthetic bile pigment-protein from the phycobiliprotein complex. Allophycocyanin has a maximum absorption at approximately 650 nanometers. The chain is Allophycocyanin subunit beta-18 (apcF) from Aglaothamnion neglectum (Red alga).